The sequence spans 907 residues: Schlafen family member 13 (907 aa).

The segment at 1-353 is n'-domain region; that stretch reads MEIHPSLVVE…WVRMMVDIGP (353 aa). Active-site residues include E205 and E210. Positions 281, 283, and 318 each coordinate Zn(2+). Residue 604-611 participates in ATP binding; that stretch reads GMPGSGKT.

It belongs to the Schlafen family. Subgroup III subfamily. Mg(2+) serves as cofactor.

It localises to the cytoplasm. Endoribonuclease that cleaves tRNAs and rRNAs. Cleaves tRNAs 11 nucleotides from the 3'-terminus at the acceptor stem. Does not act on tRNA(Sec). This chain is Schlafen family member 13, found in Rattus norvegicus (Rat).